A 201-amino-acid chain; its full sequence is Ephrin-A4 (201 aa).

The signal sequence occupies residues 1–25 (MRLLPLLRTVLWAAFLGSPLRGGSS). An Ephrin RBD domain is found at 26-155 (LRHVVYWNSS…RLQVSVCCKE (130 aa)). N-linked (GlcNAc...) asparagine glycosylation is present at N33. 2 cysteine pairs are disulfide-bonded: C58–C99 and C86–C144. Residue S170 is the site of GPI-anchor amidated serine attachment. Residues 171-201 (GTSGWRGGDTPSPLCLLLLLLLLILRLLRIL) constitute a propeptide, removed in mature form.

The protein belongs to the ephrin family. As to expression, expressed in the adult spleen, lymph node, prostate, ovary, small intestine, and colon, and in fetal heart, lung, liver and kidney. Also detected in hematopoietic cell lines.

The protein localises to the cell membrane. The protein resides in the secreted. Functionally, cell surface GPI-bound ligand for Eph receptors, a family of receptor tyrosine kinases which are crucial for migration, repulsion and adhesion during neuronal, vascular and epithelial development. Binds promiscuously Eph receptors residing on adjacent cells, leading to contact-dependent bidirectional signaling into neighboring cells. May play a role in the interaction between activated B-lymphocytes and dendritic cells in tonsils. This chain is Ephrin-A4 (EFNA4), found in Homo sapiens (Human).